We begin with the raw amino-acid sequence, 432 residues long: 3-oxo-tetronate kinase (432 aa).

ATP is bound by residues His155, Ser272, Ala324, Gly344, Glu348, 370–373 (GGET), and Gly414.

The protein belongs to the four-carbon acid sugar kinase family.

It catalyses the reaction 3-dehydro-L-erythronate + ATP = 3-dehydro-4-O-phospho-L-erythronate + ADP + H(+). It carries out the reaction 3-dehydro-D-erythronate + ATP = 3-dehydro-4-O-phospho-D-erythronate + ADP + H(+). Catalyzes the ATP-dependent phosphorylation of 3-oxo-tetronate to 3-oxo-tetronate 4-phosphate. The protein is 3-oxo-tetronate kinase of Cupriavidus necator (strain ATCC 17699 / DSM 428 / KCTC 22496 / NCIMB 10442 / H16 / Stanier 337) (Ralstonia eutropha).